The sequence spans 381 residues: uncharacterized protein (381 aa).

Positions 1–16 (MQTLLFYFFFINLIFA) are cleaved as a signal peptide. Over 17–303 (HDLNVKTYKP…KILENSPCPN (287 aa)) the chain is Lumenal. The cysteines at positions 118 and 149 are disulfide-linked. 6 N-linked (GlcNAc...) asparagine glycosylation sites follow: Asn133, Asn192, Asn225, Asn243, Asn246, and Asn287. A helical membrane pass occupies residues 304 to 324 (QPSIQPFGILMMLVSTIYGNF). Topologically, residues 325-359 (KNLYNCIKRNTIGYIYNSIYDFWITEGMLFPMRNM) are cytoplasmic. A helical membrane pass occupies residues 360-380 (DIFKITAISIGLSIPVFLWLL). A topological domain (lumenal) is located at residue Lys381.

It belongs to the calreticulin family.

The protein resides in the endoplasmic reticulum membrane. This is an uncharacterized protein from Schizosaccharomyces pombe (strain 972 / ATCC 24843) (Fission yeast).